Consider the following 362-residue polypeptide: Phosphoserine aminotransferase (362 aa).

Positions 9 and 42 each coordinate L-glutamate. Pyridoxal 5'-phosphate is bound by residues 76 to 77 (GR), Trp102, Thr153, Asp174, and Gln197. Lys198 carries the N6-(pyridoxal phosphate)lysine modification. 239–240 (NT) lines the pyridoxal 5'-phosphate pocket.

This sequence belongs to the class-V pyridoxal-phosphate-dependent aminotransferase family. SerC subfamily. As to quaternary structure, homodimer. It depends on pyridoxal 5'-phosphate as a cofactor.

The protein resides in the cytoplasm. The enzyme catalyses O-phospho-L-serine + 2-oxoglutarate = 3-phosphooxypyruvate + L-glutamate. It catalyses the reaction 4-(phosphooxy)-L-threonine + 2-oxoglutarate = (R)-3-hydroxy-2-oxo-4-phosphooxybutanoate + L-glutamate. Its pathway is amino-acid biosynthesis; L-serine biosynthesis; L-serine from 3-phospho-D-glycerate: step 2/3. It participates in cofactor biosynthesis; pyridoxine 5'-phosphate biosynthesis; pyridoxine 5'-phosphate from D-erythrose 4-phosphate: step 3/5. Catalyzes the reversible conversion of 3-phosphohydroxypyruvate to phosphoserine and of 3-hydroxy-2-oxo-4-phosphonooxybutanoate to phosphohydroxythreonine. Is involved in both pyridoxine and serine biosynthesis. The sequence is that of Phosphoserine aminotransferase (serC) from Escherichia coli (strain K12).